We begin with the raw amino-acid sequence, 423 residues long: Cytidylate cyclase (423 aa).

Residues 79–184 form the Guanylate cyclase domain; the sequence is CSLFVDISGS…LKIRIGIDFG (106 aa). An a ribonucleoside 5'-triphosphate-binding site is contributed by phenylalanine 82. Residues aspartate 84, isoleucine 85, and aspartate 128 each coordinate Mn(2+). Residues 290–409 are AGS-C domain; it reads ENEQFYSPRD…ICHDSFGLFI (120 aa).

Belongs to the adenylyl cyclase class-4/guanylyl cyclase family. Pyrimidine cyclase subfamily. As to quaternary structure, homodimer. Requires Mn(2+) as cofactor.

The protein localises to the cytoplasm. It catalyses the reaction CTP = 3',5'-cyclic CMP + diphosphate. In terms of biological role, pycsar (pyrimidine cyclase system for antiphage resistance) provides immunity against bacteriophage. The pyrimidine cyclase (PycC) synthesizes cyclic nucleotides in response to infection; these serve as specific second messenger signals. The signal activates the adjacent effector, leading to bacterial cell death and abortive phage infection. A clade E Pycsar system. Functionally, the pyrimidine cyclase gene of a two-gene Pycsar system, weakly generates cyclic CMP (cCMP) from CTP, has little to no activity on ATP, GTP or UTP. Expression of this and adjacent effector SaPycTM (AC P0DV39) probably confers resistance to bacteriophage. The genes are probably only expressed in response to bacteriophage infection. In Staphylococcus aureus, this protein is Cytidylate cyclase.